Here is a 188-residue protein sequence, read N- to C-terminus: Putative manganese efflux pump MntP (188 aa).

Transmembrane regions (helical) follow at residues 3–23, 35–55, 63–83, 104–126, 140–160, and 167–187; these read FYAL…VALA, IAAT…AGWV, FISE…GLKM, WMTV…GLAF, MATT…GVLF, and AGGL…LGLI.

The protein belongs to the MntP (TC 9.B.29) family.

The protein localises to the cell inner membrane. Functionally, probably functions as a manganese efflux pump. This Neisseria meningitidis serogroup B (strain ATCC BAA-335 / MC58) protein is Putative manganese efflux pump MntP.